A 348-amino-acid polypeptide reads, in one-letter code: Phenylalanine--tRNA ligase alpha subunit (348 aa).

E269 serves as a coordination point for Mg(2+).

It belongs to the class-II aminoacyl-tRNA synthetase family. Phe-tRNA synthetase alpha subunit type 1 subfamily. Tetramer of two alpha and two beta subunits. The cofactor is Mg(2+).

It localises to the cytoplasm. The enzyme catalyses tRNA(Phe) + L-phenylalanine + ATP = L-phenylalanyl-tRNA(Phe) + AMP + diphosphate + H(+). The sequence is that of Phenylalanine--tRNA ligase alpha subunit from Dechloromonas aromatica (strain RCB).